Consider the following 228-residue polypeptide: UPF0758 protein stu1465 (228 aa).

In terms of domain architecture, MPN spans 103–225 (QIMSSQQVAR…YYSFREERED (123 aa)). The Zn(2+) site is built by H174, H176, and D187. A JAMM motif motif is present at residues 174 to 187 (HNHPSGEAYPSRND).

It belongs to the UPF0758 family.

The chain is UPF0758 protein stu1465 from Streptococcus thermophilus (strain ATCC BAA-250 / LMG 18311).